The following is a 342-amino-acid chain: RNA 3'-terminal phosphate cyclase (342 aa).

Residues Gln-103 and 283–287 (YLADQ) contribute to the ATP site. The active-site Tele-AMP-histidine intermediate is the His-308.

This sequence belongs to the RNA 3'-terminal cyclase family. Type 1 subfamily.

The protein resides in the cytoplasm. The catalysed reaction is a 3'-end 3'-phospho-ribonucleotide-RNA + ATP = a 3'-end 2',3'-cyclophospho-ribonucleotide-RNA + AMP + diphosphate. Its function is as follows. Catalyzes the conversion of 3'-phosphate to a 2',3'-cyclic phosphodiester at the end of RNA. The mechanism of action of the enzyme occurs in 3 steps: (A) adenylation of the enzyme by ATP; (B) transfer of adenylate to an RNA-N3'P to produce RNA-N3'PP5'A; (C) and attack of the adjacent 2'-hydroxyl on the 3'-phosphorus in the diester linkage to produce the cyclic end product. The biological role of this enzyme is unknown but it is likely to function in some aspects of cellular RNA processing. The chain is RNA 3'-terminal phosphate cyclase from Shigella dysenteriae serotype 1 (strain Sd197).